We begin with the raw amino-acid sequence, 328 residues long: Beta-ketoacyl-[acyl-carrier-protein] synthase III (328 aa).

Active-site residues include cysteine 122 and histidine 255. The segment at 256 to 260 is ACP-binding; it reads QANIR. Asparagine 285 is a catalytic residue.

It belongs to the thiolase-like superfamily. FabH family. Homodimer.

The protein resides in the cytoplasm. The enzyme catalyses malonyl-[ACP] + acetyl-CoA + H(+) = 3-oxobutanoyl-[ACP] + CO2 + CoA. It participates in lipid metabolism; fatty acid biosynthesis. Functionally, catalyzes the condensation reaction of fatty acid synthesis by the addition to an acyl acceptor of two carbons from malonyl-ACP. Catalyzes the first condensation reaction which initiates fatty acid synthesis and may therefore play a role in governing the total rate of fatty acid production. Possesses both acetoacetyl-ACP synthase and acetyl transacylase activities. Its substrate specificity determines the biosynthesis of branched-chain and/or straight-chain of fatty acids. The chain is Beta-ketoacyl-[acyl-carrier-protein] synthase III from Polynucleobacter necessarius subsp. necessarius (strain STIR1).